Here is a 319-residue protein sequence, read N- to C-terminus: Protease HtpX homolog (319 aa).

Helical transmembrane passes span 6-26 and 28-48; these read TAML…VIGG and GGMM…YWNS. Position 130 (histidine 130) interacts with Zn(2+). Glutamate 131 is a catalytic residue. Histidine 134 serves as a coordination point for Zn(2+). 2 helical membrane-spanning segments follow: residues 145-165 and 172-192; these read MTAT…FFGG and PLGF…AALV. A Zn(2+)-binding site is contributed by glutamate 201. Residues 280–319 form a disordered region; the sequence is EMSTGSTAPVRPDNAVRKSRSVPRTGWGRGGSEPPKGPWS.

This sequence belongs to the peptidase M48B family. Requires Zn(2+) as cofactor.

It localises to the cell inner membrane. This chain is Protease HtpX homolog, found in Sinorhizobium medicae (strain WSM419) (Ensifer medicae).